The sequence spans 427 residues: Serine hydroxymethyltransferase (427 aa).

120 to 122 (GHI) contributes to the (6S)-5,6,7,8-tetrahydrofolate binding site. At Lys-226 the chain carries N6-(pyridoxal phosphate)lysine.

This sequence belongs to the SHMT family. As to quaternary structure, homodimer. Pyridoxal 5'-phosphate serves as cofactor.

The protein localises to the cytoplasm. It participates in amino-acid biosynthesis; glycine biosynthesis; glycine from L-serine: step 1/1. In terms of biological role, catalyzes the reversible interconversion of serine and glycine with a modified folate serving as the one-carbon carrier. Also exhibits a pteridine-independent aldolase activity toward beta-hydroxyamino acids, producing glycine and aldehydes, via a retro-aldol mechanism. The polypeptide is Serine hydroxymethyltransferase (Pyrococcus abyssi (strain GE5 / Orsay)).